The following is a 330-amino-acid chain: Putative glycosyltransferase ORF330 (330 aa).

This sequence belongs to the glycosyltransferase group 1 family. Glycosyltransferase 4 subfamily.

This is Putative glycosyltransferase ORF330 from Acidianus filamentous virus 2 (isolate Italy/Pozzuoli) (AFV-2).